A 149-amino-acid polypeptide reads, in one-letter code: SsrA-binding protein (149 aa).

The protein belongs to the SmpB family.

The protein localises to the cytoplasm. Required for rescue of stalled ribosomes mediated by trans-translation. Binds to transfer-messenger RNA (tmRNA), required for stable association of tmRNA with ribosomes. tmRNA and SmpB together mimic tRNA shape, replacing the anticodon stem-loop with SmpB. tmRNA is encoded by the ssrA gene; the 2 termini fold to resemble tRNA(Ala) and it encodes a 'tag peptide', a short internal open reading frame. During trans-translation Ala-aminoacylated tmRNA acts like a tRNA, entering the A-site of stalled ribosomes, displacing the stalled mRNA. The ribosome then switches to translate the ORF on the tmRNA; the nascent peptide is terminated with the 'tag peptide' encoded by the tmRNA and targeted for degradation. The ribosome is freed to recommence translation, which seems to be the essential function of trans-translation. In Anaplasma marginale (strain St. Maries), this protein is SsrA-binding protein.